The primary structure comprises 423 residues: Gamma-glutamyl phosphate reductase (423 aa).

It belongs to the gamma-glutamyl phosphate reductase family.

The protein resides in the cytoplasm. The enzyme catalyses L-glutamate 5-semialdehyde + phosphate + NADP(+) = L-glutamyl 5-phosphate + NADPH + H(+). Its pathway is amino-acid biosynthesis; L-proline biosynthesis; L-glutamate 5-semialdehyde from L-glutamate: step 2/2. In terms of biological role, catalyzes the NADPH-dependent reduction of L-glutamate 5-phosphate into L-glutamate 5-semialdehyde and phosphate. The product spontaneously undergoes cyclization to form 1-pyrroline-5-carboxylate. The polypeptide is Gamma-glutamyl phosphate reductase (Desulfovibrio desulfuricans (strain ATCC 27774 / DSM 6949 / MB)).